Consider the following 554-residue polypeptide: Glucose-6-phosphate isomerase (554 aa).

The active-site Proton donor is Glu359. Residues His390 and Lys518 contribute to the active site.

The protein belongs to the GPI family.

The protein resides in the cytoplasm. The enzyme catalyses alpha-D-glucose 6-phosphate = beta-D-fructose 6-phosphate. It participates in carbohydrate biosynthesis; gluconeogenesis. Its pathway is carbohydrate degradation; glycolysis; D-glyceraldehyde 3-phosphate and glycerone phosphate from D-glucose: step 2/4. Catalyzes the reversible isomerization of glucose-6-phosphate to fructose-6-phosphate. The protein is Glucose-6-phosphate isomerase of Stutzerimonas stutzeri (strain A1501) (Pseudomonas stutzeri).